Consider the following 134-residue polypeptide: Phosphoribosyl-AMP cyclohydrolase (134 aa).

Asp80 lines the Mg(2+) pocket. Position 81 (Cys81) interacts with Zn(2+). Asp82 and Asp84 together coordinate Mg(2+). Residues Cys98 and Cys105 each coordinate Zn(2+).

It belongs to the PRA-CH family. As to quaternary structure, homodimer. It depends on Mg(2+) as a cofactor. The cofactor is Zn(2+).

It localises to the cytoplasm. It catalyses the reaction 1-(5-phospho-beta-D-ribosyl)-5'-AMP + H2O = 1-(5-phospho-beta-D-ribosyl)-5-[(5-phospho-beta-D-ribosylamino)methylideneamino]imidazole-4-carboxamide. The protein operates within amino-acid biosynthesis; L-histidine biosynthesis; L-histidine from 5-phospho-alpha-D-ribose 1-diphosphate: step 3/9. Its function is as follows. Catalyzes the hydrolysis of the adenine ring of phosphoribosyl-AMP. This is Phosphoribosyl-AMP cyclohydrolase from Bordetella bronchiseptica (strain ATCC BAA-588 / NCTC 13252 / RB50) (Alcaligenes bronchisepticus).